Consider the following 783-residue polypeptide: LPS-assembly protein LptD (783 aa).

Residues 1–24 form the signal peptide; that stretch reads MKKNYYSLISFSIFTALYSTAGFA.

The protein belongs to the LptD family. As to quaternary structure, component of the lipopolysaccharide transport and assembly complex. Interacts with LptE and LptA.

The protein localises to the cell outer membrane. Together with LptE, is involved in the assembly of lipopolysaccharide (LPS) at the surface of the outer membrane. The protein is LPS-assembly protein LptD of Mannheimia succiniciproducens (strain KCTC 0769BP / MBEL55E).